The following is a 693-amino-acid chain: MPEFLEDPSVLTKDKLKSELVANNVTLPAGEQRKDVYVQLYLQHLTARNRPPLAAGANSKGPPDFSSDEEREPTPVLGSGASVGRGRGAVGRKATKKTDKPRLEDKDDLDVTELSNEELLDQLVRYGVNPGPIVGTTRKLYEKKLLKLREQGTESRSSTPLPTVSSSAENTRQNGSNDSDRYSDNDEGKKKEHKKVKSARDCVPFSELASTPSGAFFQGISFPEISTRPPLGRTELQAAKKVQTTKRDPPRETCTDTALPGKGQTHKLAPGRSLFIPSESSYDRCVEKSSSPSSQREFAARLVSAAASPSLIRETTTTYSKDIVENICRGGKSRAQPLRAEEPGVSDQSVFSSEREVLQESERSQVISPPLAQAIRDYVNSLLVQGGVGSLPGTSDSVPTLDVENICKRLSQSSYQDSESLSPPRKVPRLSEKPARGGDSGSCVAFQNTPGSEHRSSFAKSVVSHSLTTLGVEVSKPPPQHDKIEASEPSFPLHESILKVVEEEWQQIDRQLPSVACRYPVSSIEAARILSVPKVDDEILGFISEATPRAATQASSTESCDKHLDLALCRSYEAAASALQIAAHTAFVAKSLQADISQAAQIINSDPSDAQQALRILNRTYDAASYLCDAAFDEVRMSACAMGSSTMGRRYLWLKDCKISPASKNKLTVAPFKGGTLFGGEVHKVIKKRGNKQ.

Residues 5 to 48 (LEDPSVLTKDKLKSELVANNVTLPAGEQRKDVYVQLYLQHLTAR) enclose the LEM-like domain. Disordered regions lie at residues 48–113 (RNRP…DVTE), 148–211 (LREQ…LAST), and 227–270 (TRPP…KLAP). Residues 49–107 (NRPPLAAGANSKGPPDFSSDEEREPTPVLGSGASVGRGRGAVGRKATKKTDKPRLEDKD) form a linker region. Phosphoserine is present on residues S59, S66, and S67. At T74 the chain carries Phosphothreonine. S79 and S82 each carry phosphoserine. R85 and R87 each carry omega-N-methylarginine. A compositionally biased stretch (basic and acidic residues) spans 96–105 (KKTDKPRLED). The LEM domain occupies 108-152 (DLDVTELSNEELLDQLVRYGVNPGPIVGTTRKLYEKKLLKLREQG). Position 153 is a phosphothreonine (T153). Residues 154-177 (ESRSSTPLPTVSSSAENTRQNGSN) are compositionally biased toward polar residues. Phosphoserine is present on residues S155 and S158. Phosphothreonine occurs at positions 159 and 163. Residues S165 and S167 each carry the phosphoserine modification. A compositionally biased stretch (basic and acidic residues) spans 178-190 (DSDRYSDNDEGKK). Positions 190 to 196 (KKEHKKV) match the Nuclear localization signal motif. S206 bears the N6-acetyllysine mark. Positions 245–254 (TKRDPPRETC) are enriched in basic and acidic residues. At S310 the chain carries Phosphoserine. An Omega-N-methylarginine modification is found at R329. The disordered stretch occupies residues 332-351 (KSRAQPLRAEEPGVSDQSVF). Phosphoserine occurs at positions 349, 352, 368, 420, and 422. Over residues 412 to 422 (QSSYQDSESLS) the composition is skewed to low complexity. The segment at 412–442 (QSSYQDSESLSPPRKVPRLSEKPARGGDSGS) is disordered. The stretch at 557-656 (TESCDKHLDL…MGRRYLWLKD (100 aa)) forms a coiled coil. N6-acetyllysine is present on K655.

It belongs to the LEM family. In terms of assembly, homooligomer. Interacts with LMNA, BANF1 and RB1 and with chromosomes. Associates directly or indirectly with lamins at specific cell-cycle stages. Interacts with CMTM6. Post-translationally, phosphorylated in a mitose-specific manner.

The protein localises to the nucleus. Its subcellular location is the chromosome. Functionally, may be involved in the structural organization of the nucleus and in the post-mitotic nuclear assembly. Plays an important role, together with LMNA, in the nuclear anchorage of RB1. The sequence is that of Lamina-associated polypeptide 2, isoforms alpha/zeta (Tmpo) from Mus musculus (Mouse).